The following is a 317-amino-acid chain: 1D-myo-inositol 2-acetamido-2-deoxy-alpha-D-glucopyranoside deacetylase (317 aa).

The Zn(2+) site is built by H15, D18, and H154. Residues 289-317 (QDLDNRNPNSQPPADQAREDHLLTGLGFA) form a disordered region.

This sequence belongs to the MshB deacetylase family. Zn(2+) serves as cofactor.

The enzyme catalyses 1D-myo-inositol 2-acetamido-2-deoxy-alpha-D-glucopyranoside + H2O = 1D-myo-inositol 2-amino-2-deoxy-alpha-D-glucopyranoside + acetate. In terms of biological role, catalyzes the deacetylation of 1D-myo-inositol 2-acetamido-2-deoxy-alpha-D-glucopyranoside (GlcNAc-Ins) in the mycothiol biosynthesis pathway. The chain is 1D-myo-inositol 2-acetamido-2-deoxy-alpha-D-glucopyranoside deacetylase from Segniliparus rotundus (strain ATCC BAA-972 / CDC 1076 / CIP 108378 / DSM 44985 / JCM 13578).